The following is a 3948-amino-acid chain: Hybrid PKS-NRPS synthetase ucsA (3948 aa).

The region spanning 11–440 is the Ketosynthase family 3 (KS3) domain; that stretch reads NEPIAVIGSG…GTNAHAILER (430 aa). Active-site for beta-ketoacyl synthase activity residues include Cys-184, His-323, and His-363. The segment at 548 to 881 is malonyl-CoA:ACP transacylase (MAT) domain; it reads IFTGQGAQWP…FSTAIGQLWA (334 aa). An N-terminal hotdog fold region spans residues 940 to 1079; the sequence is HPLLGTLGAD…GHIRLTITDF (140 aa). The dehydratase (DH) domain stretch occupies residues 940-1254; it reads HPLLGTLGAD…IRLIPFAAAS (315 aa). The region spanning 940–1256 is the PKS/mFAS DH domain; the sequence is HPLLGTLGAD…LIPFAAASEA (317 aa). His-972 serves as the catalytic Proton acceptor; for dehydratase activity. Residues 1098–1256 form a C-terminal hotdog fold region; it reads MTEVDQNLFY…LIPFAAASEA (159 aa). Residue Asp-1161 is the Proton donor; for dehydratase activity of the active site. The methyltransferase (MT) domain stretch occupies residues 1299 to 1460; that stretch reads LAHVVGQITH…LRAGFTGVET (162 aa). Positions 1989 to 2165 are ketoreductase (KR) domain; the sequence is TYILFGLAGA…ASVIDIGPIS (177 aa). Positions 2275–2357 constitute a Carrier 1 domain; it reads DVARVLRHAI…GLVDFAVDNL (83 aa). An O-(pantetheine 4'-phosphoryl)serine modification is found at Ser-2317. A compositionally biased stretch (low complexity) spans 2381-2404; the sequence is PKAKTDAPAAAPTPASATAPGSKS. A disordered region spans residues 2381 to 2473; sequence PKAKTDAPAA…SSQAASLESS (93 aa). 2 stretches are compositionally biased toward polar residues: residues 2405–2418 and 2426–2437; these read DGNVSSIARSADQS and PQPTAILTNATA. The segment covering 2441 to 2456 has biased composition (low complexity); that stretch reads PVSPSLSVTGSTSSAA. Residues 2462-2473 are compositionally biased toward polar residues; the sequence is PTSSQAASLESS. Residues 2489 to 2926 are condensation (C) domain; sequence EKTLPMSYGQ…PQIFNSSKVQ (438 aa). Residues 2950–3355 form an adenylation (A) (KR) domain region; the sequence is DIAAVQPTLT…GEFVLQARIK (406 aa). A disordered region spans residues 3483–3507; sequence PLTNKGGLKETPVARPTRYQNDPIP. One can recognise a Carrier 2 domain in the interval 3513-3592; it reads SSPFSSLDQV…QMASLLDGKD (80 aa). An O-(pantetheine 4'-phosphoryl)serine modification is found at Ser-3552. The interval 3633–3852 is reductase (R) domain; it reads LTGATGFLGL…QFVPVEDVAN (220 aa).

The protein in the C-terminal section; belongs to the NRP synthetase family.

It functions in the pathway mycotoxin biosynthesis. Hybrid PKS-NRPS synthetase; part of the gene cluster that mediates the biosynthesis of UCS1025A, a member of the pyrrolizidinone family that acts as a strong telomerase inhibitor and displays potent antibacterial and antitumor properties. These compounds share a hemiaminal-containing pyrrolizidinone core fused with a gamma-lactone, giving a furopyrrolizidine that is connected to a decalin fragment. The polyketide synthase module (PKS) of the PKS-NRPS ucsA is responsible for the synthesis of the polyketide backbone via the condensation of an acetyl-CoA starter unit with 6 malonyl-CoA units. The downstream nonribosomal peptide synthetase (NRPS) module then amidates the carboxyl end of the polyketide with a 2S,3S-methylproline derived from L-isoleucine by the 2-oxoglutarate-dependent dioxygenase ucsF which converts L-isoleucine to (4S,5S)-4-methylpyrroline-5-carboxylate that is further converted to 2S,3S-methylproline by the pyrroline-5-carboxylate reductase ucsG. Reductive release of the completed aminoacyl polyketide from the assembly line can form the 3-pyrrolin-2-one structure via an intramolecular Knoevenagel reaction. Because ucsA lacks a designated enoylreductase (ER) domain, the required activity is provided the enoyl reductase ucsL. This keto acyclic precursor is the substrate of the Diels-Alderase ucsH, that catalyzes the Diels-Alder cycloaddition. Oxidation of the 3S-methyl group to a carboxylate by the cytochrome P450 monooxygenase ucsK allows an oxa-Michael cyclization that might involve the reductase/dehydrogenase ucsI and which furnishes the furopyrrolizidine. The oxidase ucsJ likely plays a critical role in stereoselective reduction of the C5-C6 double bond to afford the required R-configured carboxylate group. Further enolization and oxidation at C5 by an unidentified enzyme affords the last intermediate that can undergo oxa-Michael cyclization to yield UCS1025A. This Acremonium sp protein is Hybrid PKS-NRPS synthetase ucsA.